Reading from the N-terminus, the 69-residue chain is Large ribosomal subunit protein uL29 (69 aa).

Belongs to the universal ribosomal protein uL29 family.

In Clostridium perfringens (strain ATCC 13124 / DSM 756 / JCM 1290 / NCIMB 6125 / NCTC 8237 / Type A), this protein is Large ribosomal subunit protein uL29.